The primary structure comprises 492 residues: Glutamyl-tRNA(Gln) amidotransferase subunit A (492 aa).

Catalysis depends on charge relay system residues K78 and S158. S182 functions as the Acyl-ester intermediate in the catalytic mechanism.

Belongs to the amidase family. GatA subfamily. In terms of assembly, heterotrimer of A, B and C subunits.

The enzyme catalyses L-glutamyl-tRNA(Gln) + L-glutamine + ATP + H2O = L-glutaminyl-tRNA(Gln) + L-glutamate + ADP + phosphate + H(+). Functionally, allows the formation of correctly charged Gln-tRNA(Gln) through the transamidation of misacylated Glu-tRNA(Gln) in organisms which lack glutaminyl-tRNA synthetase. The reaction takes place in the presence of glutamine and ATP through an activated gamma-phospho-Glu-tRNA(Gln). The sequence is that of Glutamyl-tRNA(Gln) amidotransferase subunit A from Rhodopseudomonas palustris (strain HaA2).